The primary structure comprises 72 residues: Translation initiation factor IF-1 (72 aa).

The S1-like domain occupies 1-72 (MAKEEAIEVE…TRGRIIFRER (72 aa)).

The protein belongs to the IF-1 family. In terms of assembly, component of the 30S ribosomal translation pre-initiation complex which assembles on the 30S ribosome in the order IF-2 and IF-3, IF-1 and N-formylmethionyl-tRNA(fMet); mRNA recruitment can occur at any time during PIC assembly.

It localises to the cytoplasm. In terms of biological role, one of the essential components for the initiation of protein synthesis. Stabilizes the binding of IF-2 and IF-3 on the 30S subunit to which N-formylmethionyl-tRNA(fMet) subsequently binds. Helps modulate mRNA selection, yielding the 30S pre-initiation complex (PIC). Upon addition of the 50S ribosomal subunit IF-1, IF-2 and IF-3 are released leaving the mature 70S translation initiation complex. The sequence is that of Translation initiation factor IF-1 from Treponema denticola (strain ATCC 35405 / DSM 14222 / CIP 103919 / JCM 8153 / KCTC 15104).